The primary structure comprises 525 residues: GMP synthase [glutamine-hydrolyzing] (525 aa).

Residues proline 8–aspartate 206 form the Glutamine amidotransferase type-1 domain. Cysteine 85 serves as the catalytic Nucleophile. Residues histidine 180 and glutamate 182 contribute to the active site. The GMPS ATP-PPase domain occupies tryptophan 207–arginine 400. Residue serine 234–serine 240 participates in ATP binding.

As to quaternary structure, homodimer.

It carries out the reaction XMP + L-glutamine + ATP + H2O = GMP + L-glutamate + AMP + diphosphate + 2 H(+). It participates in purine metabolism; GMP biosynthesis; GMP from XMP (L-Gln route): step 1/1. In terms of biological role, catalyzes the synthesis of GMP from XMP. This is GMP synthase [glutamine-hydrolyzing] from Legionella pneumophila (strain Paris).